Here is a 350-residue protein sequence, read N- to C-terminus: Phosphate acyltransferase (350 aa).

Belongs to the PlsX family. As to quaternary structure, homodimer. Probably interacts with PlsY.

It localises to the cytoplasm. It catalyses the reaction a fatty acyl-[ACP] + phosphate = an acyl phosphate + holo-[ACP]. Its pathway is lipid metabolism; phospholipid metabolism. Its function is as follows. Catalyzes the reversible formation of acyl-phosphate (acyl-PO(4)) from acyl-[acyl-carrier-protein] (acyl-ACP). This enzyme utilizes acyl-ACP as fatty acyl donor, but not acyl-CoA. The protein is Phosphate acyltransferase of Phenylobacterium zucineum (strain HLK1).